The sequence spans 206 residues: N-(5'-phosphoribosyl)anthranilate isomerase (206 aa).

The protein belongs to the TrpF family.

The catalysed reaction is N-(5-phospho-beta-D-ribosyl)anthranilate = 1-(2-carboxyphenylamino)-1-deoxy-D-ribulose 5-phosphate. The protein operates within amino-acid biosynthesis; L-tryptophan biosynthesis; L-tryptophan from chorismate: step 3/5. The chain is N-(5'-phosphoribosyl)anthranilate isomerase from Pseudomonas syringae pv. syringae (strain B728a).